The sequence spans 73 residues: uncharacterized protein (73 aa).

Residues 20–49 (NATYNKNLELEKRLAKIRNEIPNKSKLIAT) are a coiled coil.

This is an uncharacterized protein from Acheta domesticus (House cricket).